The primary structure comprises 440 residues: Putative F-box/LRR-repeat protein At5g15620 (440 aa).

The 52-residue stretch at 1 to 52 (MDRFSNLPDDVIYHIVSFLSAKEATCLKFVSKNFQNLVTIKRNVVFHHWESF) folds into the F-box domain. 7 LRR repeats span residues 4–31 (FSNLPDDVIYHIVSFLSAKEATCLKFVS), 126–153 (LKLGCGFVIDILPKNALLPALKTLILDS), 156–181 (FYASDGCAFTRLLSASPVLEELVIDR), 194–205 (SSPTLKRLTLRR), 210–235 (PEPETWTDFESVSFDTPSLAYLKYKD), 264–289 (YWLNRSADPSNLIRGLKNVEILSIKV), and 318–343 (EADFCWDPLQILLEKSPNLKTLTIEG).

The polypeptide is Putative F-box/LRR-repeat protein At5g15620 (Arabidopsis thaliana (Mouse-ear cress)).